Reading from the N-terminus, the 648-residue chain is Biosynthetic arginine decarboxylase (648 aa).

N6-(pyridoxal phosphate)lysine is present on Lys-109. 291–301 contributes to the substrate binding site; the sequence is IDVGGGLGIDF.

The protein belongs to the Orn/Lys/Arg decarboxylase class-II family. SpeA subfamily. The cofactor is Mg(2+). Pyridoxal 5'-phosphate serves as cofactor.

It carries out the reaction L-arginine + H(+) = agmatine + CO2. Its pathway is amine and polyamine biosynthesis; agmatine biosynthesis; agmatine from L-arginine: step 1/1. Catalyzes the biosynthesis of agmatine from arginine. This is Biosynthetic arginine decarboxylase from Prochlorococcus marinus (strain MIT 9515).